Consider the following 547-residue polypeptide: Chaperonin GroEL (547 aa).

Residues Thr30–Pro33, Lys51, Asp87–Thr91, Gly415, Asp479–Ala481, and Asp495 each bind ATP.

The protein belongs to the chaperonin (HSP60) family. As to quaternary structure, forms a cylinder of 14 subunits composed of two heptameric rings stacked back-to-back. Interacts with the co-chaperonin GroES.

It is found in the cytoplasm. It catalyses the reaction ATP + H2O + a folded polypeptide = ADP + phosphate + an unfolded polypeptide.. Its function is as follows. Together with its co-chaperonin GroES, plays an essential role in assisting protein folding. The GroEL-GroES system forms a nano-cage that allows encapsulation of the non-native substrate proteins and provides a physical environment optimized to promote and accelerate protein folding. The protein is Chaperonin GroEL of Dichelobacter nodosus (strain VCS1703A).